The sequence spans 105 residues: Vitelline membrane protein Vm32E (105 aa).

Residues 1–17 (MHFIALIVAVCVAFAGA) form the signal peptide. The VM domain occupies 25–62 (GIAAPPCPKNYLFSCQPNLVPAPCAQEAASYGSAGAYA).

Belongs to the vitelline membrane family.

The protein resides in the secreted. In terms of biological role, major early eggshell protein. This Drosophila ananassae (Fruit fly) protein is Vitelline membrane protein Vm32E.